A 738-amino-acid chain; its full sequence is Glucan 1,4-alpha-glucosidase SusB (738 aa).

The signal sequence occupies residues 1-21 (MKKRKILSLIAFLCISFIANA). Residue Glu-194 coordinates Ca(2+). Substrate-binding positions include 215–217 (PNS), 437–439 (HHE), and 507–508 (HE). Ca(2+) is bound by residues Glu-508, Glu-526, and Glu-532. The active-site Proton donor/acceptor is Glu-532.

It belongs to the glycosyl hydrolase 97 family. Monomer. It depends on Ca(2+) as a cofactor.

The protein localises to the periplasm. It catalyses the reaction Hydrolysis of terminal (1-&gt;4)-linked alpha-D-glucose residues successively from non-reducing ends of the chains with release of beta-D-glucose.. The protein operates within glycan degradation; starch degradation. Its function is as follows. Glucoamylase that hydrolyzes alpha-1,4-glucosidic linkages, alpha-1,6-, alpha-1,3- and alpha-1,2-glucosidic linkages during starch degradation. The chain is Glucan 1,4-alpha-glucosidase SusB (susB) from Bacteroides thetaiotaomicron (strain ATCC 29148 / DSM 2079 / JCM 5827 / CCUG 10774 / NCTC 10582 / VPI-5482 / E50).